The following is a 215-amino-acid chain: Pyridoxine/pyridoxamine 5'-phosphate oxidase (215 aa).

Substrate contacts are provided by residues 9-12 (RKEY) and Lys-67. FMN contacts are provided by residues 62–67 (RIVLLK), 77–78 (YT), Lys-84, and Gln-106. 3 residues coordinate substrate: Tyr-124, Arg-128, and Ser-132. FMN-binding positions include 141–142 (QS) and Trp-187. 193 to 195 (RLH) provides a ligand contact to substrate. Residue Arg-197 coordinates FMN.

The protein belongs to the pyridoxamine 5'-phosphate oxidase family. As to quaternary structure, homodimer. It depends on FMN as a cofactor.

The enzyme catalyses pyridoxamine 5'-phosphate + O2 + H2O = pyridoxal 5'-phosphate + H2O2 + NH4(+). It catalyses the reaction pyridoxine 5'-phosphate + O2 = pyridoxal 5'-phosphate + H2O2. Its pathway is cofactor metabolism; pyridoxal 5'-phosphate salvage; pyridoxal 5'-phosphate from pyridoxamine 5'-phosphate: step 1/1. It participates in cofactor metabolism; pyridoxal 5'-phosphate salvage; pyridoxal 5'-phosphate from pyridoxine 5'-phosphate: step 1/1. Its function is as follows. Catalyzes the oxidation of either pyridoxine 5'-phosphate (PNP) or pyridoxamine 5'-phosphate (PMP) into pyridoxal 5'-phosphate (PLP). The protein is Pyridoxine/pyridoxamine 5'-phosphate oxidase of Cytophaga hutchinsonii (strain ATCC 33406 / DSM 1761 / CIP 103989 / NBRC 15051 / NCIMB 9469 / D465).